Reading from the N-terminus, the 195-residue chain is Cysteine/O-acetylserine efflux protein (195 aa).

Topologically, residues 1–7 (MTPTLLS) are periplasmic. The chain crosses the membrane as a helical span at residues 8 to 28 (AFWTYTLITAMTPGPNNILAL). The Cytoplasmic segment spans residues 29–46 (SSATSHGFRQSTRVLAGM). The helical transmembrane segment at 47-67 (SLGFLIVMLLCAGISFSLAVI) threads the bilayer. Topologically, residues 68–69 (DP) are periplasmic. Residues 70-90 (AAVHLLSWAGAAYIVWLAWKI) traverse the membrane as a helical segment. Residues 91–104 (ATSPTKEDGLQAKP) lie on the Cytoplasmic side of the membrane. Residues 105 to 125 (ISFWASFALQFVNVKIILYGV) form a helical membrane-spanning segment. Topologically, residues 126 to 141 (TALSTFVLPQTQALSW) are periplasmic. A helical membrane pass occupies residues 142-162 (VVGVSVLLAMIGTFGNVCWAL). At 163-176 (AGHLFQRLFRQYGR) the chain is on the cytoplasmic side. A helical transmembrane segment spans residues 177–194 (QLNIVLALLLVYCAVRIF). A topological domain (periplasmic) is located at residue Tyr195.

It belongs to the Rht family.

The protein resides in the cell inner membrane. The enzyme catalyses O-acetyl-L-serine(in) = O-acetyl-L-serine(out). It carries out the reaction L-cysteine(in) = L-cysteine(out). Exporter of O-acetylserine (OAS) and cysteine. The polypeptide is Cysteine/O-acetylserine efflux protein (eamB) (Escherichia coli O9:H4 (strain HS)).